The chain runs to 181 residues: Isopentenyl-diphosphate Delta-isomerase (181 aa).

Mn(2+) contacts are provided by H25 and H32. One can recognise a Nudix hydrolase domain in the interval 30 to 164 (PLHLAFSCWL…PWAFSPWMVM (135 aa)). Residue C67 is part of the active site. A Mn(2+)-binding site is contributed by H69. E87 is a binding site for Mg(2+). Mn(2+) is bound by residues E114 and E116. Residue E116 is part of the active site.

Belongs to the IPP isomerase type 1 family. As to quaternary structure, homodimer. It depends on Mg(2+) as a cofactor. Mn(2+) is required as a cofactor.

It localises to the cytoplasm. It carries out the reaction isopentenyl diphosphate = dimethylallyl diphosphate. Its pathway is isoprenoid biosynthesis; dimethylallyl diphosphate biosynthesis; dimethylallyl diphosphate from isopentenyl diphosphate: step 1/1. In terms of biological role, catalyzes the 1,3-allylic rearrangement of the homoallylic substrate isopentenyl (IPP) to its highly electrophilic allylic isomer, dimethylallyl diphosphate (DMAPP). The chain is Isopentenyl-diphosphate Delta-isomerase from Salmonella paratyphi B (strain ATCC BAA-1250 / SPB7).